The chain runs to 314 residues: Hydroxyacyl-coenzyme A dehydrogenase, mitochondrial (314 aa).

Residues 1–12 (MAFATRQLVRSL) constitute a mitochondrion transit peptide. NAD(+) is bound by residues 34 to 39 (GGGLMG) and Asp57. CoA contacts are provided by Ser73 and Lys80. Lys80 carries the post-translational modification N6-succinyllysine. 2 positions are modified to N6-acetyllysine; alternate: Lys81 and Lys87. Lys81 and Lys87 each carry N6-succinyllysine; alternate. NAD(+) is bound at residue Glu122. The residue at position 125 (Lys125) is an N6-acetyllysine. Lys127 is an NAD(+) binding site. Lys127 carries the N6-(2-hydroxyisobutyryl)lysine modification. Residue Lys136 is modified to N6-acetyllysine; alternate. Lys136 is subject to N6-succinyllysine; alternate. The NAD(+) site is built by Ser149 and Asn173. Ser149 is a binding site for CoA. N6-acetyllysine is present on Lys179. N6-acetyllysine; alternate occurs at positions 185, 192, and 202. Residues Lys185, Lys192, and Lys202 each carry the N6-succinyllysine; alternate modification. Lys206 is modified (N6-succinyllysine). Residues Lys212 and Lys241 each carry the N6-acetyllysine; alternate modification. An N6-succinyllysine; alternate mark is found at Lys212 and Lys241. NAD(+) is bound at residue Lys305. Position 312 is an N6-acetyllysine; alternate (Lys312). Lys312 is subject to N6-succinyllysine; alternate.

This sequence belongs to the 3-hydroxyacyl-CoA dehydrogenase family. In terms of assembly, homodimer. Interacts with GLUD1; this interaction inhibits the activation of glutamate dehydrogenase 1 (GLUD1). Succinylation at Lys-81, adjacent to a coenzyme A binding site. Desuccinylated by SIRT5.

The protein localises to the mitochondrion matrix. It catalyses the reaction a (3S)-3-hydroxyacyl-CoA + NAD(+) = a 3-oxoacyl-CoA + NADH + H(+). The catalysed reaction is (3S)-3-hydroxybutanoyl-CoA + NAD(+) = acetoacetyl-CoA + NADH + H(+). It carries out the reaction (3S)-hydroxydecanoyl-CoA + NAD(+) = 3-oxodecanoyl-CoA + NADH + H(+). The enzyme catalyses (3S)-hydroxyhexadecanoyl-CoA + NAD(+) = 3-oxohexadecanoyl-CoA + NADH + H(+). Its pathway is lipid metabolism; fatty acid beta-oxidation. Functionally, mitochondrial fatty acid beta-oxidation enzyme that catalyzes the third step of the beta-oxidation cycle for medium and short-chain 3-hydroxy fatty acyl-CoAs (C4 to C10). Plays a role in the control of insulin secretion by inhibiting the activation of glutamate dehydrogenase 1 (GLUD1), an enzyme that has an important role in regulating amino acid-induced insulin secretion. Plays a role in the maintenance of normal spermatogenesis through the reduction of fatty acid accumulation in the testes. The protein is Hydroxyacyl-coenzyme A dehydrogenase, mitochondrial (HADH) of Sus scrofa (Pig).